We begin with the raw amino-acid sequence, 786 residues long: E3 ubiquitin-protein ligase pub3 (786 aa).

Residues 1 to 109 (MEQGAKRVRF…RSNREVSLTR (109 aa)) form the C2 domain. Disordered stretches follow at residues 134-225 (IRAP…NSNA) and 263-306 (TWTR…DSGN). The segment covering 142 to 193 (SSTTANRTTSTPTTTTARTTRTTPRPTATTNTSNQSTSNSTRNGTSAATSNG) has biased composition (low complexity). Over residues 204–213 (HRSSPVTNRQ) the composition is skewed to polar residues. Residues 214 to 225 (TNNTSALSNSNA) are compositionally biased toward low complexity. The 34-residue stretch at 236–269 (GRLPPGWERRADSLGRTYYVDHNTRTTTWTRPAS) folds into the WW 1 domain. 2 stretches are compositionally biased toward polar residues: residues 263 to 285 (TWTR…QRLN) and 295 to 305 (SNPSLMQSDSG). 2 WW domains span residues 306 to 339 (NDLP…DPRN) and 364 to 397 (GPLP…DPRL). Residues 453-786 (SAHDLKKRLM…VENTVGFGNE (334 aa)) form the HECT domain. Cys754 serves as the catalytic Glycyl thioester intermediate.

It carries out the reaction S-ubiquitinyl-[E2 ubiquitin-conjugating enzyme]-L-cysteine + [acceptor protein]-L-lysine = [E2 ubiquitin-conjugating enzyme]-L-cysteine + N(6)-ubiquitinyl-[acceptor protein]-L-lysine.. Its pathway is protein modification; protein ubiquitination. Its function is as follows. E3 ubiquitin-protein ligase which accepts ubiquitin from an E2 ubiquitin-conjugating enzyme in the form of a thioester and then directly transfers the ubiquitin to targeted substrates. The chain is E3 ubiquitin-protein ligase pub3 (pub3) from Schizosaccharomyces pombe (strain 972 / ATCC 24843) (Fission yeast).